The chain runs to 137 residues: Flavodoxin (137 aa).

Positions 2–137 (VEIVYWSGTG…KELGEAAAKA (136 aa)) constitute a Flavodoxin-like domain.

Belongs to the flavodoxin family. The cofactor is FMN.

In terms of biological role, low-potential electron donor to a number of redox enzymes. The polypeptide is Flavodoxin (Megasphaera elsdenii).